Consider the following 394-residue polypeptide: Tryptophan synthase beta chain (394 aa).

N6-(pyridoxal phosphate)lysine is present on Lys-84.

The protein belongs to the TrpB family. In terms of assembly, tetramer of two alpha and two beta chains. The cofactor is pyridoxal 5'-phosphate.

It carries out the reaction (1S,2R)-1-C-(indol-3-yl)glycerol 3-phosphate + L-serine = D-glyceraldehyde 3-phosphate + L-tryptophan + H2O. It functions in the pathway amino-acid biosynthesis; L-tryptophan biosynthesis; L-tryptophan from chorismate: step 5/5. In terms of biological role, the beta subunit is responsible for the synthesis of L-tryptophan from indole and L-serine. The sequence is that of Tryptophan synthase beta chain from Clostridium acetobutylicum (strain ATCC 824 / DSM 792 / JCM 1419 / IAM 19013 / LMG 5710 / NBRC 13948 / NRRL B-527 / VKM B-1787 / 2291 / W).